Consider the following 62-residue polypeptide: Overexpressed in colon carcinoma 1 protein homolog (62 aa).

Positions 1–16 (MGCGNSTAGGAGGRGA) are enriched in gly residues. The disordered stretch occupies residues 1–62 (MGCGNSTAGG…SGQTKAAPKD (62 aa)).

It belongs to the OCC1 family.

This is Overexpressed in colon carcinoma 1 protein homolog from Gallus gallus (Chicken).